Reading from the N-terminus, the 252-residue chain is Small ribosomal subunit protein uS2 (252 aa).

The protein belongs to the universal ribosomal protein uS2 family. As to quaternary structure, component of the small ribosomal subunit. Mature ribosomes consist of a small (40S) and a large (60S) subunit. The 40S subunit contains about 33 different proteins and 1 molecule of RNA (18S). The 60S subunit contains about 49 different proteins and 3 molecules of RNA (25S, 5.8S and 5S). Interacts with RPS21.

It is found in the cytoplasm. Functionally, required for the assembly and/or stability of the 40S ribosomal subunit. Required for the processing of the 20S rRNA-precursor to mature 18S rRNA in a late step of the maturation of 40S ribosomal subunits. The sequence is that of Small ribosomal subunit protein uS2 from Encephalitozoon cuniculi (strain GB-M1) (Microsporidian parasite).